The chain runs to 772 residues: Glucocorticoid receptor (772 aa).

A compositionally biased stretch (basic and acidic residues) spans 1-15 (MDSKESLSPPGREEV). The segment at 1–22 (MDSKESLSPPGREEVPSSVLRP) is disordered. The modulating stretch occupies residues 1–415 (MDSKESLSPP…TTAAGPPPKL (415 aa)). R25 carries the omega-N-methylarginine modification. The segment at 39–82 (APVRVPASSPSLAPAAQPDSKQQRLAVDFPKGSASNAQQPDLSR) is disordered. The span at 44 to 58 (PASSPSLAPAAQPDS) shows a compositional bias: low complexity. Phosphoserine occurs at positions 47, 115, 136, and 143. The interval 132 to 186 (NRSASGADNPRSTAPAAGSAAPTEGFPKTHSDLASERQNPKGQTGGSAGSAKLHP) is disordered. The segment covering 143–156 (STAPAAGSAAPTEG) has biased composition (low complexity). The segment covering 158–170 (PKTHSDLASERQN) has biased composition (basic and acidic residues). Residues S203, S211, and S226 each carry the phosphoserine modification. K258 is covalently cross-linked (Glycyl lysine isopeptide (Lys-Gly) (interchain with G-Cter in SUMO2)). Glycyl lysine isopeptide (Lys-Gly) (interchain with G-Cter in SUMO); alternate cross-links involve residues K277 and K293. Glycyl lysine isopeptide (Lys-Gly) (interchain with G-Cter in SUMO2); alternate cross-links involve residues K277 and K293. 2 positions are modified to phosphoserine: S307 and S400. A Glycyl lysine isopeptide (Lys-Gly) (interchain with G-Cter in ubiquitin) cross-link involves residue K414. NR C4-type zinc fingers lie at residues 416-436 (CLVCSDEASGCHYGVLTCGSC) and 452-476 (CAGRNDCIIDKIRRKNCPACRYRKC). Positions 416-481 (CLVCSDEASG…RYRKCLQAGM (66 aa)) form a DNA-binding region, nuclear receptor. 4 positions are modified to N6-acetyllysine: K475, K487, K489, and K490. Residues 480–772 (GMNLEARKTK…NIKKLLFHQK (293 aa)) form an interaction with CLOCK region. The tract at residues 482-518 (NLEARKTKKKIKGIQQTSTGVSQETSENPSNRTVVPA) is hinge. The interval 494–513 (GIQQTSTGVSQETSENPSNR) is disordered. Residues 499 to 513 (STGVSQETSENPSNR) are compositionally biased toward polar residues. Residues 519-753 (ALPQLTPTLV…FPEMLAEIIT (235 aa)) enclose the NR LBD domain. An interaction with CRY1 region spans residues 527 to 692 (LVSLLEVIEP…EIRMTYIKEL (166 aa)). Residue K698 forms a Glycyl lysine isopeptide (Lys-Gly) (interchain with G-Cter in SUMO) linkage.

The protein belongs to the nuclear hormone receptor family. NR3 subfamily. As to quaternary structure, heteromultimeric cytoplasmic complex with HSP90AA1, HSPA1A/HSPA1B, and FKBP5 or another immunophilin such as PPID, STIP1, or the immunophilin homolog PPP5C. Upon ligand binding FKBP5 dissociates from the complex and FKBP4 takes its place, thereby linking the complex to dynein and mediating transport to the nucleus, where the complex dissociates. Probably forms a complex composed of chaperones HSP90 and HSP70, co-chaperones CDC37, PPP5C, TSC1 and client protein TSC2, CDK4, AKT, RAF1 and NR3C1; this complex does not contain co-chaperones STIP1/HOP and PTGES3/p23. Directly interacts with UNC45A. Binds to DNA as a homodimer, and as heterodimer with NR3C2 or the retinoid X receptor. Binds STAT5A and STAT5B homodimers and heterodimers. Interacts with NRIP1, POU2F1, POU2F2 and TRIM28. Interacts with several coactivator complexes, including the SMARCA4 complex, CREBBP/EP300, TADA2L (Ada complex) and p160 coactivators such as NCOA2 and NCOA6. Interaction with BAG1 inhibits transactivation. Interacts with HEXIM1 and TGFB1I1. Interacts with NCOA1. Interacts with NCOA3, SMARCA4, SMARCC1, SMARCD1, and SMARCE1. Interacts with CLOCK, CRY1 and CRY2 in a ligand-dependent fashion. Interacts with CIART. Interacts with RWDD3. Interacts with UBE2I/UBC9 and this interaction is enhanced in the presence of RWDD3. Interacts with GRIP1. Interacts with NR4A3 (via nuclear receptor DNA-binding domain), represses transcription activity of NR4A3 on the POMC promoter Nur response element (NurRE). Directly interacts with PNRC2 to attract and form a complex with UPF1 and DCP1A; the interaction leads to rapid mRNA degradation. Interacts with GSK3B. Interacts with FNIP1 and FNIP2. Interacts (via C-terminus) with HNRNPU (via C-terminus). Interacts with MCM3AP. Interacts (via domain NR LBD) with HSP90AA1 and HSP90AB1. In the absence of hormonal ligand, interacts with TACC1. Interacts (via NR LBD domain) with ZNF764 (via KRAB domain); the interaction regulates transcription factor activity of NR3C1 by directing its actions toward certain biologic pathways. Post-translationally, acetylation by CLOCK reduces its binding to glucocorticoid response elements and its transcriptional activity. Increased proteasome-mediated degradation in response to glucocorticoids. In terms of processing, phosphorylated in the absence of hormone; becomes hyperphosphorylated in the presence of glucocorticoid. The Ser-203, Ser-226 and Ser-399-phosphorylated forms are mainly cytoplasmic, and the Ser-211-phosphorylated form is nuclear. Phosphorylation at Ser-211 increases transcriptional activity. Phosphorylation at Ser-203, Ser-226 and Ser-399 decreases signaling capacity. Phosphorylation at Ser-399 may protect from glucocorticoid-induced apoptosis. Phosphorylation at Ser-203 and Ser-211 is not required in regulation of chromosome segregation. May be dephosphorylated by PPP5C, attenuates NR3C1 action. Post-translationally, ubiquitinated by UBR5, leading to its degradation: UBR5 specifically recognizes and binds ligand-bound NR3C1 when it is not associated with coactivators (NCOAs). In presence of NCOAs, the UBR5-degron is not accessible, preventing its ubiquitination and degradation. Sumoylation at Lys-277 and Lys-293 negatively regulates its transcriptional activity. Sumoylation at Lys-698 positively regulates its transcriptional activity in the presence of RWDD3. Sumoylation at Lys-277 and Lys-293 is dispensable whereas sumoylation at Lys-698 is critical for the stimulatory effect of RWDD3 on its transcriptional activity. Heat shock increases sumoylation in a RWDD3-dependent manner.

Its subcellular location is the cytoplasm. The protein localises to the nucleus. It localises to the mitochondrion. It is found in the cytoskeleton. The protein resides in the spindle. Its subcellular location is the microtubule organizing center. The protein localises to the centrosome. It localises to the chromosome. It is found in the nucleoplasm. Its function is as follows. Receptor for glucocorticoids (GC). Has a dual mode of action: as a transcription factor that binds to glucocorticoid response elements (GRE), both for nuclear and mitochondrial DNA, and as a modulator of other transcription factors. Affects inflammatory responses, cellular proliferation and differentiation in target tissues. Involved in chromatin remodeling. Plays a role in rapid mRNA degradation by binding to the 5' UTR of target mRNAs and interacting with PNRC2 in a ligand-dependent manner which recruits the RNA helicase UPF1 and the mRNA-decapping enzyme DCP1A, leading to RNA decay. Could act as a coactivator for STAT5-dependent transcription upon growth hormone (GH) stimulation and could reveal an essential role of hepatic GR in the control of body growth. Mediates glucocorticoid-induced apoptosis. Promotes accurate chromosome segregation during mitosis. May act as a tumor suppressor. May play a negative role in adipogenesis through the regulation of lipolytic and antilipogenic gene expression. The protein is Glucocorticoid receptor (NR3C1) of Oryctolagus cuniculus (Rabbit).